We begin with the raw amino-acid sequence, 103 residues long: Histone H4 (103 aa).

A compositionally biased stretch (gly residues) spans 1–14; it reads MSGRGKGGKGLGKG. Residues 1–20 form a disordered region; sequence MSGRGKGGKGLGKGGAKRHR. A DNA-binding region spans residues 17–21; that stretch reads KRHRK.

Belongs to the histone H4 family. The nucleosome is a histone octamer containing two molecules each of H2A, H2B, H3 and H4 assembled in one H3-H4 heterotetramer and two H2A-H2B heterodimers. The octamer wraps approximately 147 bp of DNA.

The protein resides in the nucleus. Its subcellular location is the chromosome. Its function is as follows. Core component of nucleosome. Nucleosomes wrap and compact DNA into chromatin, limiting DNA accessibility to the cellular machineries which require DNA as a template. Histones thereby play a central role in transcription regulation, DNA repair, DNA replication and chromosomal stability. DNA accessibility is regulated via a complex set of post-translational modifications of histones, also called histone code, and nucleosome remodeling. This Volvox carteri (Green alga) protein is Histone H4 (H4-I).